The primary structure comprises 272 residues: Glutamate racemase (272 aa).

Residues 9-10 and 41-42 contribute to the substrate site; these read DS and YG. Catalysis depends on Cys73, which acts as the Proton donor/acceptor. 74–75 is a binding site for substrate; it reads NT. Cys183 (proton donor/acceptor) is an active-site residue. 184–185 serves as a coordination point for substrate; sequence TH.

The protein belongs to the aspartate/glutamate racemases family.

It catalyses the reaction L-glutamate = D-glutamate. It functions in the pathway cell wall biogenesis; peptidoglycan biosynthesis. Its function is as follows. Provides the (R)-glutamate required for cell wall biosynthesis. The chain is Glutamate racemase from Shewanella sp. (strain MR-7).